A 295-amino-acid polypeptide reads, in one-letter code: sn-glycerol-3-phosphate transport system permease protein UgpA (295 aa).

At 1-11 the chain is on the cytoplasmic side; sequence MSSSRPVFRSR. A helical transmembrane segment spans residues 12–32; it reads WLPYLLVAPQLIITVIFFIWP. Residues 33–80 lie on the Periplasmic side of the membrane; sequence AGEALWYSLQSVDPFGFSSQFVGLDNFVTLFHDSYYLDSFWTTIKFST. Residues 76 to 284 form the ABC transmembrane type-1 domain; sequence IKFSTFVTVS…FLVIVLTVVQ (209 aa). The chain crosses the membrane as a helical span at residues 81-101; sequence FVTVSGLLVSLFFAALVEYIV. The Cytoplasmic portion of the chain corresponds to 102–109; it reads RGSRFYQT. A helical transmembrane segment spans residues 110–130; sequence LMLLPYAVAPAVAAVLWIFLF. Over 131-156 the chain is Periplasmic; sequence NPGRGLITHFLAEFGYDWNHAQNSGQ. Residues 157-177 form a helical membrane-spanning segment; sequence AMFLVVFASVWKQISYNFLFF. Over 178–207 the chain is Cytoplasmic; sequence YAALQSIPRSLIEAAAIDGAGPIRRFFKIA. Residues 208 to 228 form a helical membrane-spanning segment; it reads LPLIAPVSFFLLVVNLVYAFF. The Periplasmic segment spans residues 229–262; the sequence is DTFPVIDAATSGGPVQATTTLIYKIYREGFTGLD. Residues 263-283 form a helical membrane-spanning segment; the sequence is LASSAAQSMVLMFLVIVLTVV. Residues 284–295 lie on the Cytoplasmic side of the membrane; it reads QFRYVESKVRYQ.

The protein belongs to the binding-protein-dependent transport system permease family. UgpAE subfamily. The complex is composed of two ATP-binding proteins (UgpC), two transmembrane proteins (UgpA and UgpE) and a solute-binding protein (UgpB).

It localises to the cell inner membrane. In terms of biological role, part of the ABC transporter complex UgpBAEC involved in sn-glycerol-3-phosphate (G3P) import. Probably responsible for the translocation of the substrate across the membrane. This chain is sn-glycerol-3-phosphate transport system permease protein UgpA (ugpA), found in Shigella flexneri.